The chain runs to 762 residues: Ribosome-releasing factor 2, mitochondrial (762 aa).

Residues 1 to 35 (MLLSLTFPVLRGCTGHLVNRSLQAPRWRVTWKRSY) constitute a mitochondrion transit peptide. The tr-type G domain occupies 54–341 (SKIRNIGIMA…AITAYLPAPN (288 aa)). GTP contacts are provided by residues 63-70 (AHIDAGKT), 127-131 (DTPGH), and 181-184 (NKMD).

It belongs to the TRAFAC class translation factor GTPase superfamily. Classic translation factor GTPase family. EF-G/EF-2 subfamily.

Its subcellular location is the mitochondrion. The catalysed reaction is GTP + H2O = GDP + phosphate + H(+). Functionally, mitochondrial GTPase that mediates the disassembly of ribosomes from messenger RNA at the termination of mitochondrial protein biosynthesis. Acts in collaboration with mrrf. GTP hydrolysis follows the ribosome disassembly and probably occurs on the ribosome large subunit. Not involved in the GTP-dependent ribosomal translocation step during translation elongation. This chain is Ribosome-releasing factor 2, mitochondrial (gfm2), found in Danio rerio (Zebrafish).